Consider the following 381-residue polypeptide: E3 ubiquitin-protein ligase Fancl (381 aa).

The tract at residues 110–293 (NIYYDILALY…MFDLCYFPMP (184 aa)) is UBC-RWD region (URD). The RING-CH-type; degenerate zinc-finger motif lies at 303 to 374 (EEDNEELRCN…PFCKAKLSTS (72 aa)). Positions 311, 314, 329, 334, 339, 342, 364, and 367 each coordinate Zn(2+).

In terms of assembly, interacts (via C-terminus) with FANCI and Fancd2.

The protein localises to the nucleus. The enzyme catalyses S-ubiquitinyl-[E2 ubiquitin-conjugating enzyme]-L-cysteine + [acceptor protein]-L-lysine = [E2 ubiquitin-conjugating enzyme]-L-cysteine + N(6)-ubiquitinyl-[acceptor protein]-L-lysine.. Its pathway is protein modification; protein ubiquitination. In terms of biological role, ubiquitin ligase protein that mediates monoubiquitination of Fancd2. Ubiquitination of Fancd2 is stimulated by ionising radiation. Together with Fancd2, and probably FANCI, involved in DNA repair of damage caused by agents that induce interstrand cross-links but not agents that cause double strand breaks. The chain is E3 ubiquitin-protein ligase Fancl from Drosophila melanogaster (Fruit fly).